Reading from the N-terminus, the 433-residue chain is Enolase (433 aa).

Gln163 lines the (2R)-2-phosphoglycerate pocket. Glu205 acts as the Proton donor in catalysis. Mg(2+) is bound by residues Asp241, Glu289, and Asp316. Positions 341, 370, 371, and 392 each coordinate (2R)-2-phosphoglycerate. The active-site Proton acceptor is the Lys341.

It belongs to the enolase family. Mg(2+) is required as a cofactor.

The protein resides in the cytoplasm. It is found in the secreted. The protein localises to the cell surface. The catalysed reaction is (2R)-2-phosphoglycerate = phosphoenolpyruvate + H2O. It participates in carbohydrate degradation; glycolysis; pyruvate from D-glyceraldehyde 3-phosphate: step 4/5. Its function is as follows. Catalyzes the reversible conversion of 2-phosphoglycerate (2-PG) into phosphoenolpyruvate (PEP). It is essential for the degradation of carbohydrates via glycolysis. The chain is Enolase from Treponema denticola (strain ATCC 35405 / DSM 14222 / CIP 103919 / JCM 8153 / KCTC 15104).